The chain runs to 349 residues: Hypoxia-inducible factor 1-alpha inhibitor (349 aa).

Residues 1-14 (MAATAAEVAASGSG) show a composition bias toward low complexity. Positions 1-51 (MAATAAEVAASGSGEAREEAEAPGPAWDESQLRSYSFPTRPIPRLSQSDPR) are disordered. A2 carries the N-acetylalanine modification. An interaction with VHL region spans residues 2-125 (AATAAEVAAS…PRSNREEIKF (124 aa)). A JmjC domain is found at 142–307 (ERLYLQQTLN…KGAPTPKRIE (166 aa)). Residue Y145 coordinates 2-oxoglutarate. Residues D152 and 181–183 (QLT) each bind substrate. A 2-oxoglutarate-binding site is contributed by T196. Fe cation-binding residues include H199 and D201. 201 to 203 (DEQ) contacts substrate. N205 and K214 together coordinate 2-oxoglutarate. Position 238–239 (238–239 (RQ)) interacts with substrate. H279 is a binding site for Fe cation. Residue N294 coordinates 2-oxoglutarate. Substrate-binding residues include A300 and N321.

In terms of assembly, homodimer; homodimerization is essential for catalytic activity. Interacts with VHL and HIF1A. Part of a complex with VHL, HIF1A and HDAC1 or HDAC2 or HDAC3. Interacts with NFKB1 and NFKBIA. Interacts with NOTCH1, NOTCH2 and NOTCH3 but not with NOTCH4. Interacts with ABPA3. Interacts with TNKS2. Interacts with PPP1R12A. Interacts with UBE3A. Interacts with ASB4. Interacts with ANKS3. Interacts with NECAB3; the interaction is indirect and seems to be mediated by APBA3. The cofactor is Fe(2+).

The protein resides in the nucleus. It localises to the cytoplasm. Its subcellular location is the perinuclear region. It catalyses the reaction L-asparaginyl-[hypoxia-inducible factor alpha subunit] + 2-oxoglutarate + O2 = (3S)-3-hydroxy-L-asparaginyl-[hypoxia-inducible factor alpha subunit] + succinate + CO2. The enzyme catalyses L-histidyl-[ankyrin-repeat domain protein] + 2-oxoglutarate + O2 = (3S)-3-hydroxy-L-histidyl-[ankyrin-repeat domain protein] + succinate + CO2. The catalysed reaction is L-asparaginyl-[ankyrin-repeat domain protein] + 2-oxoglutarate + O2 = (3S)-3-hydroxy-L-asparaginyl-[ankyrin-repeat domain protein] + succinate + CO2. It carries out the reaction L-aspartyl-[ankyrin-repeat domain protein] + 2-oxoglutarate + O2 = (3S)-3-hydroxy-L-aspartyl-[ankyrin-repeat domain protein] + succinate + CO2. Functionally, hydroxylates HIF-1 alpha at 'Asn-799' in the C-terminal transactivation domain (CAD). Functions as an oxygen sensor and, under normoxic conditions, the hydroxylation prevents interaction of HIF-1 with transcriptional coactivators including Cbp/p300-interacting transactivator. Involved in transcriptional repression through interaction with HIF1A, VHL and histone deacetylases. Hydroxylates specific Asn residues within ankyrin repeat domains (ARD) of NFKB1, NFKBIA, NOTCH1, ASB4, PPP1R12A and several other ARD-containing proteins. Also hydroxylates Asp and His residues within ARDs of ANK1 and TNKS2, respectively. Negatively regulates NOTCH1 activity, accelerating myogenic differentiation. Positively regulates ASB4 activity, promoting vascular differentiation. The sequence is that of Hypoxia-inducible factor 1-alpha inhibitor (Hif1an) from Mus musculus (Mouse).